The chain runs to 493 residues: MDTKLYIDGQWVNSSSGKTVDKYSPVTGQVIGRFEAATRDDVDRAIDAAEDAFWAWNDLGSVERSKIIYRAKELIEKNRAELENIIMEENGKPVKEAKEEVDGVIDQIQYYAEWARKLNGEVVEGTSSHRKIFQYKVPYGIVVALTPWNFPAGMVARKLAPALLTGNTVVLKPSSDTPGSAEWIVRKFVEAGVPKGVLNFITGRGSEIGDYIVEHKKVNLITMTGSTATGQRIMQKASANMAKLILELGGKAPFMVWKDADMDNALKTLLWAKYWNAGQSCIAAERLYVHEDIYDTFMSRFVELSRKLALGDPKNADMGPLINKGALQATSEIVEEAKESGAKILFGGSQPSLSGPYRNGYFFLPTIIGNADQKSKIFQEEIFAPVIGARKISSVEEMYDLANDSKYGLASYLFTKDPNIIFEASERIRFGELYVNMPGPEASQGYHTGFRMTGQAGEGSKYGISEYLKLKNIYVDYSGKPLHINTVRDDLFQ.

Positions 70–92 (RAKELIEKNRAELENIIMEENGK) form a coiled coil. NADP(+)-binding positions include 146-149 (TPWN), Arg-157, 172-176 (KPSSD), 204-210 (RGSEIGD), 225-248 (GSTA…ILEL), Cys-281, and 381-383 (EIF). 2 residues coordinate substrate: Asn-149 and Arg-157. Glu-247 serves as the catalytic Proton acceptor. Cys-281 contributes to the substrate binding site. Catalysis depends on Cys-281, which acts as the Proton donor.

Belongs to the aldehyde dehydrogenase family. Glyceraldehyde dehydrogenase subfamily. As to quaternary structure, homotetramer. Dimer of dimers.

The catalysed reaction is D-glyceraldehyde + NADP(+) + H2O = (R)-glycerate + NADPH + 2 H(+). It participates in carbohydrate degradation; glycolysis. Its activity is regulated as follows. Inhibited by calcium, cadmium, copper and mercury ions. Stable for 2 hours at 60 degrees Celsius but activity is decreased to less than 50 percent within 20 minutes at 80 degrees Celsius. Two folds activity enhancement in the presence of 1 mM glutathione, DTT, or 2-mercaptoethanol. Complete activity inhibition by thiol-modifying reagents such as p-chloromercuribenzoic acid or p-hydroxy-mercuribenzoic acid. NADP-dependent dehydrogenase of the nED (non-phosphorylated Entner-Doudoroff) pathway with highest activity towards glyceraldehydes (e.g. D,L-glyceraldehyde and D-glyceraldehyde), to a lesser extent towards D,L-glyceraldehyde-3-phosphate and glycolaldehyde, but no activity towards aliphatic or aromatic aldehydes. The chain is D-glyceraldehyde dehydrogenase (NADP(+)) from Thermoplasma acidophilum (strain ATCC 25905 / DSM 1728 / JCM 9062 / NBRC 15155 / AMRC-C165).